Reading from the N-terminus, the 413-residue chain is FAD-dependent monooxygenase vrtH (413 aa).

The first 23 residues, 1-23, serve as a signal peptide directing secretion; that stretch reads MQRANHTRPVLIIGAGLSGLAIG. The N-linked (GlcNAc...) asparagine glycan is linked to asparagine 5. Residues glutamate 37 and alanine 48 each coordinate FAD. Asparagine 94 carries N-linked (GlcNAc...) asparagine glycosylation. Residue arginine 120 coordinates FAD. N-linked (GlcNAc...) asparagine glycosylation is present at asparagine 232. Residues aspartate 327 and glycine 340 each contribute to the FAD site.

Belongs to the paxM FAD-dependent monooxygenase family. FAD serves as cofactor.

The protein operates within secondary metabolite biosynthesis; terpenoid biosynthesis. Its function is as follows. FAD-dependent monooxygenase; part of the gene cluster that mediates the biosynthesis of viridicatumtoxin, a tetracycline-like fungal meroterpenoid with a unique, fused spirobicyclic ring system. The first step of the pathway is the production of the malonamoyl-CoA starter unit for the polyketide synthase vrtA. The aldolase vrtJ may be involved in the synthesis of the malonamate substrate for malonamoyl-CoA synthetase vrtB. The polyketide synthase vrtA then may utilize the malonamoyl-CoA starter unit, followed by sequential condensation of eight malonyl-CoA units to form the polyketide backbone. The cyclization of the last ring could be mediated by the lactamase-like protein vrtG. The proposed post-PKS tailoring steps are a hydroxylation at C5 catalyzed the cytochrome P450 monooxygenase vrtE, a hydroxylation at C12a catalyzed by VrtH and/or VrtI, and an O-methylation by the O-methyltransferase vrtF. VrtC is then proposed to catalyze the transfer of a geranyl group synthesized by vrtD to the aromatic C ring of the tetracyclic polyketide intermediate of viridicatumtoxin to yield previridicatumtoxin. Finally, the cytochrome P450 monooxygenase vrtK catalyzes the spirocyclization of the geranyl moiety of previridicatumtoxin to afford viridicatumtoxin. This is FAD-dependent monooxygenase vrtH from Penicillium aethiopicum.